The sequence spans 534 residues: uncharacterized protein (534 aa).

3 disordered regions span residues Met1–Pro150, Arg252–Pro284, and Trp383–Pro434. Residues Ser8 to Trp67 are compositionally biased toward basic and acidic residues. Over residues Ser102–Thr113 the composition is skewed to polar residues. A compositionally biased stretch (pro residues) spans Pro130–Ser141. Over residues Arg252–Arg262 the composition is skewed to basic and acidic residues. The span at Asn263 to Ser272 shows a compositional bias: low complexity. Polar residues predominate over residues Asn393–Phe408.

This is an uncharacterized protein from Schizosaccharomyces pombe (strain 972 / ATCC 24843) (Fission yeast).